The sequence spans 336 residues: MSRVTLSRYLIEQTRSNNTPADLRFLIEVVARACKEISHHVSKGALGGVLGSMGTENVQGEVQKKLDVISNDILLEANEWGGHLAGMASEEMDNAYQIPGKYPKGAYLLVFDPLDGSSNIDVNVSVGTIFSVLRCPNQYLSQNESLNEEAFLQPGTEQVAAGYAIYGPQTMLILTLGNGVKGFTLDRELGSFVLTHENIRVPETTAEFAINMSNQRHWEAPVQRYVGELLAGETGPLKKNYNMRWIASMVADVHRILTRGGLFMYPRDAREPSKPGKLRLMYEANPMSFIIEQAGGASTNGYDRILDIKPESLHQRVSVILGSKEEVERVTAYHKE.

4 residues coordinate Mg(2+): Glu90, Asp112, Leu114, and Asp115. Residues 115-118 (DGSS), Asn211, and Lys277 contribute to the substrate site. Glu283 is a Mg(2+) binding site.

It belongs to the FBPase class 1 family. Homotetramer. Mg(2+) serves as cofactor.

The protein resides in the cytoplasm. It carries out the reaction beta-D-fructose 1,6-bisphosphate + H2O = beta-D-fructose 6-phosphate + phosphate. It participates in carbohydrate biosynthesis; gluconeogenesis. This is Fructose-1,6-bisphosphatase class 1 from Pseudomonas putida (strain ATCC 700007 / DSM 6899 / JCM 31910 / BCRC 17059 / LMG 24140 / F1).